The chain runs to 196 residues: Molybdenum cofactor guanylyltransferase (196 aa).

GTP-binding positions include 10-12 (LAG), K23, N51, D69, and D99. Position 99 (D99) interacts with Mg(2+).

The protein belongs to the MobA family. In terms of assembly, monomer. Mg(2+) is required as a cofactor.

Its subcellular location is the cytoplasm. It catalyses the reaction Mo-molybdopterin + GTP + H(+) = Mo-molybdopterin guanine dinucleotide + diphosphate. In terms of biological role, transfers a GMP moiety from GTP to Mo-molybdopterin (Mo-MPT) cofactor (Moco or molybdenum cofactor) to form Mo-molybdopterin guanine dinucleotide (Mo-MGD) cofactor. This Shewanella baltica (strain OS155 / ATCC BAA-1091) protein is Molybdenum cofactor guanylyltransferase.